A 328-amino-acid chain; its full sequence is Helicase VP6-A (328 aa).

2 disordered regions span residues Asp-31–Asn-128 and Val-180–Ile-237. 3 stretches are compositionally biased toward basic and acidic residues: residues Glu-36–Asn-61, Ala-71–Ile-83, and Pro-96–Gly-109. Lys-110 contributes to the ATP binding site. Residues Lys-110–Asn-128 are compositionally biased toward gly residues. Basic and acidic residues-rich tracts occupy residues Val-180 to Arg-205 and Pro-214 to Glu-230.

This sequence belongs to the orbivirus VP6 family. In terms of assembly, homohexamer.

It is found in the virion. It catalyses the reaction ATP + H2O = ADP + phosphate + H(+). ATP dependent RNA helicase essential for RNA packaging and viral transcription. Possesses ss- and dsRNA-binding capacity. The chain is Helicase VP6-A (Segment-9) from Bluetongue virus 1 (isolate South Africa) (BTV 1).